We begin with the raw amino-acid sequence, 253 residues long: Large ribosomal subunit protein uL4 (253 aa).

Positions 62 to 107 (WGSGRGVSHVPRLKNSSRAARVPHAKGGRRAHPPKPEADRSEKVNT) are disordered. A compositionally biased stretch (basic residues) spans 82–94 (RVPHAKGGRRAHP). A compositionally biased stretch (basic and acidic residues) spans 95–107 (PKPEADRSEKVNT).

Belongs to the universal ribosomal protein uL4 family. As to quaternary structure, part of the 50S ribosomal subunit.

One of the primary rRNA binding proteins, this protein initially binds near the 5'-end of the 23S rRNA. It is important during the early stages of 50S assembly. It makes multiple contacts with different domains of the 23S rRNA in the assembled 50S subunit and ribosome. Its function is as follows. Forms part of the polypeptide exit tunnel. The chain is Large ribosomal subunit protein uL4 from Methanosarcina mazei (strain ATCC BAA-159 / DSM 3647 / Goe1 / Go1 / JCM 11833 / OCM 88) (Methanosarcina frisia).